We begin with the raw amino-acid sequence, 84 residues long: Translational regulator CsrA (84 aa).

Belongs to the CsrA/RsmA family. As to quaternary structure, homodimer; the beta-strands of each monomer intercalate to form a hydrophobic core, while the alpha-helices form wings that extend away from the core.

Its subcellular location is the cytoplasm. A translational regulator that binds mRNA to regulate translation initiation and/or mRNA stability. Usually binds in the 5'-UTR at or near the Shine-Dalgarno sequence preventing ribosome-binding, thus repressing translation. Its main target seems to be the major flagellin gene, while its function is anatagonized by FliW. The sequence is that of Translational regulator CsrA from Leptospira borgpetersenii serovar Hardjo-bovis (strain JB197).